Here is a 186-residue protein sequence, read N- to C-terminus: Peptidyl-tRNA hydrolase (186 aa).

Tyr-14 contributes to the tRNA binding site. His-19 acts as the Proton acceptor in catalysis. TRNA contacts are provided by Tyr-61, Asn-63, and Asn-107.

This sequence belongs to the PTH family. As to quaternary structure, monomer.

It localises to the cytoplasm. The enzyme catalyses an N-acyl-L-alpha-aminoacyl-tRNA + H2O = an N-acyl-L-amino acid + a tRNA + H(+). Hydrolyzes ribosome-free peptidyl-tRNAs (with 1 or more amino acids incorporated), which drop off the ribosome during protein synthesis, or as a result of ribosome stalling. In terms of biological role, catalyzes the release of premature peptidyl moieties from peptidyl-tRNA molecules trapped in stalled 50S ribosomal subunits, and thus maintains levels of free tRNAs and 50S ribosomes. This chain is Peptidyl-tRNA hydrolase, found in Helicobacter acinonychis (strain Sheeba).